Consider the following 455-residue polypeptide: RQC trigger complex subunit RQT4 homolog (455 aa).

2 disordered regions span residues 64–98 (STHS…SHPS) and 118–148 (PASR…GVMT). Polar residues-rich tracts occupy residues 65–98 (THSG…SHPS) and 119–130 (ASRNKSQSNNIS). Serine 70 carries the post-translational modification Phosphoserine. Serine 380 carries the phosphoserine modification.

Component of the RQT (ribosome quality control trigger) complex.

It localises to the cytoplasm. It is found in the cytosol. Functionally, probably functions as part of the RQC trigger (RQT) complex that activates the ribosome quality control (RQC) pathway, a pathway that degrades nascent peptide chains during problematic translation. In Schizosaccharomyces pombe (strain 972 / ATCC 24843) (Fission yeast), this protein is RQC trigger complex subunit RQT4 homolog.